A 483-amino-acid chain; its full sequence is WAS/WASL-interacting protein family member 3 (483 aa).

The span at 1–29 (MPVPPPPPPPLPPPPPPLGAPPPPPPSAP) shows a compositional bias: pro residues. Residues 1 to 414 (MPVPPPPPPP…GGQLRNGSLH (414 aa)) form a disordered region. 3 short sequence motifs (profilin-binding motif) span residues 3–8 (VPPPPP), 11–16 (LPPPPP), and 20–25 (APPPPP). The WH2 domain occupies 45 to 62 (GRSALLADIQQGTRLRKV). Position 46 is an asymmetric dimethylarginine (Arg46). The RLRK signature appears at 58-61 (RLRK). Composition is skewed to polar residues over residues 63-78 (TQIN…SSKG) and 87-96 (ANTRGASTPP). Ser149 bears the Phosphoserine mark. Over residues 166-192 (PPRPNVPAPPPPTPPPPPPPLPPPLPS) the composition is skewed to pro residues. A Phosphoserine modification is found at Ser202. Composition is skewed to pro residues over residues 215 to 239 (VAPP…PLPP) and 256 to 271 (HLPP…PPCG). Residues 277-288 (AEPASPAQDAQE) show a composition bias toward low complexity. Positions 289–298 (PPAPPPPLPP) are enriched in pro residues. Low complexity-rich tracts occupy residues 299-308 (YASCSPRASL) and 331-345 (PSFQ…AQAL). Ser383 is subject to Phosphoserine. Residues 393–404 (QQATAWTPTQQP) are compositionally biased toward low complexity. Residues 424–448 (TFHSVEDFPPPDEYKPCQKIYPSKI) carry the WASP-binding motif motif. The tract at residues 461 to 483 (EAVGQSSDDIKGRNSQLSLKTLR) is disordered. Over residues 473–483 (RNSQLSLKTLR) the composition is skewed to polar residues.

It belongs to the verprolin family. As to quaternary structure, interacts with WASL, and monomeric and filamentous actin.

The protein localises to the cytoplasm. In terms of biological role, may be a regulator of cytoskeletal organization. May have a role in spermatogenesis. This is WAS/WASL-interacting protein family member 3 (WIPF3) from Homo sapiens (Human).